A 376-amino-acid polypeptide reads, in one-letter code: NIF3-like protein 1 (376 aa).

The residue at position 108 (K108) is an N6-acetyllysine. The mediates interaction with COPS2 stretch occupies residues 243-376 (LLLHTGMGRL…ETDRDPLRVV (134 aa)). Residue T254 is modified to Phosphothreonine. Phosphoserine is present on S258.

The protein belongs to the GTP cyclohydrolase I type 2/NIF3 family. In terms of assembly, homodimer. Interacts with COPS2. Interacts with THOC7.

The protein localises to the cytoplasm. It is found in the nucleus. Functionally, may function as a transcriptional corepressor through its interaction with COPS2, negatively regulating the expression of genes involved in neuronal differentiation. The chain is NIF3-like protein 1 from Rattus norvegicus (Rat).